The chain runs to 311 residues: tRNA-cytidine(32) 2-sulfurtransferase (311 aa).

A PP-loop motif motif is present at residues Ser-47–Ser-52. Residues Cys-122, Cys-125, and Cys-213 each coordinate [4Fe-4S] cluster.

This sequence belongs to the TtcA family. Homodimer. The cofactor is Mg(2+). [4Fe-4S] cluster serves as cofactor.

The protein localises to the cytoplasm. The enzyme catalyses cytidine(32) in tRNA + S-sulfanyl-L-cysteinyl-[cysteine desulfurase] + AH2 + ATP = 2-thiocytidine(32) in tRNA + L-cysteinyl-[cysteine desulfurase] + A + AMP + diphosphate + H(+). The protein operates within tRNA modification. In terms of biological role, catalyzes the ATP-dependent 2-thiolation of cytidine in position 32 of tRNA, to form 2-thiocytidine (s(2)C32). The sulfur atoms are provided by the cysteine/cysteine desulfurase (IscS) system. This chain is tRNA-cytidine(32) 2-sulfurtransferase, found in Citrobacter koseri (strain ATCC BAA-895 / CDC 4225-83 / SGSC4696).